Reading from the N-terminus, the 176-residue chain is Alkyl hydroperoxide reductase AhpD (176 aa).

The active-site Proton donor is C131. The cysteines at positions 131 and 134 are disulfide-linked. Residue C134 is the Cysteine sulfenic acid (-SOH) intermediate of the active site.

This sequence belongs to the AhpD family.

The enzyme catalyses N(6)-[(R)-dihydrolipoyl]-L-lysyl-[lipoyl-carrier protein] + a hydroperoxide = N(6)-[(R)-lipoyl]-L-lysyl-[lipoyl-carrier protein] + an alcohol + H2O. Antioxidant protein with alkyl hydroperoxidase activity. Required for the reduction of the AhpC active site cysteine residues and for the regeneration of the AhpC enzyme activity. This is Alkyl hydroperoxide reductase AhpD from Methylobacterium sp. (strain 4-46).